The following is a 485-amino-acid chain: Glutamate--tRNA ligase (485 aa).

Residues 11–21 (PSPTGLLHIGN) carry the 'HIGH' region motif. Residues 255–259 (KLSKR) carry the 'KMSKS' region motif. Lys-258 serves as a coordination point for ATP.

This sequence belongs to the class-I aminoacyl-tRNA synthetase family. Glutamate--tRNA ligase type 1 subfamily. In terms of assembly, monomer.

Its subcellular location is the cytoplasm. It catalyses the reaction tRNA(Glu) + L-glutamate + ATP = L-glutamyl-tRNA(Glu) + AMP + diphosphate. Functionally, catalyzes the attachment of glutamate to tRNA(Glu) in a two-step reaction: glutamate is first activated by ATP to form Glu-AMP and then transferred to the acceptor end of tRNA(Glu). The protein is Glutamate--tRNA ligase of Streptococcus sanguinis (strain SK36).